Consider the following 341-residue polypeptide: Phosphate acyltransferase (341 aa).

It belongs to the PlsX family. In terms of assembly, homodimer. Probably interacts with PlsY.

It is found in the cytoplasm. It catalyses the reaction a fatty acyl-[ACP] + phosphate = an acyl phosphate + holo-[ACP]. The protein operates within lipid metabolism; phospholipid metabolism. Catalyzes the reversible formation of acyl-phosphate (acyl-PO(4)) from acyl-[acyl-carrier-protein] (acyl-ACP). This enzyme utilizes acyl-ACP as fatty acyl donor, but not acyl-CoA. In Chlorobaculum parvum (strain DSM 263 / NCIMB 8327) (Chlorobium vibrioforme subsp. thiosulfatophilum), this protein is Phosphate acyltransferase.